Reading from the N-terminus, the 173-residue chain is C-phycocyanin-2 beta subunit (173 aa).

The residue at position 73 (asparagine 73) is an N4-methylasparagine. Positions 83 and 154 each coordinate (2R,3E)-phycocyanobilin.

Belongs to the phycobiliprotein family. As to quaternary structure, heterodimer of an alpha and a beta subunit, which further assembles into trimers and the trimers into hexamers. Post-translationally, contains two covalently linked bilin chromophores.

The protein resides in the cellular thylakoid membrane. Its function is as follows. Light-harvesting photosynthetic bile pigment-protein from the phycobiliprotein complex (phycobilisome, PBS). Phycocyanin is the major phycobiliprotein in the PBS rod. The protein is C-phycocyanin-2 beta subunit (cpcB2) of Synechococcus sp. (strain ATCC 27144 / PCC 6301 / SAUG 1402/1) (Anacystis nidulans).